The sequence spans 294 residues: Ribosomal protein L11 methyltransferase (294 aa).

Thr-146, Gly-167, Asp-189, and Asn-231 together coordinate S-adenosyl-L-methionine.

Belongs to the methyltransferase superfamily. PrmA family.

It localises to the cytoplasm. The catalysed reaction is L-lysyl-[protein] + 3 S-adenosyl-L-methionine = N(6),N(6),N(6)-trimethyl-L-lysyl-[protein] + 3 S-adenosyl-L-homocysteine + 3 H(+). In terms of biological role, methylates ribosomal protein L11. The polypeptide is Ribosomal protein L11 methyltransferase (Aliivibrio salmonicida (strain LFI1238) (Vibrio salmonicida (strain LFI1238))).